A 236-amino-acid chain; its full sequence is 1-(5-phosphoribosyl)-5-[(5-phosphoribosylamino)methylideneamino] imidazole-4-carboxamide isomerase (236 aa).

D8 functions as the Proton acceptor in the catalytic mechanism. D129 (proton donor) is an active-site residue.

This sequence belongs to the HisA/HisF family.

It is found in the cytoplasm. It carries out the reaction 1-(5-phospho-beta-D-ribosyl)-5-[(5-phospho-beta-D-ribosylamino)methylideneamino]imidazole-4-carboxamide = 5-[(5-phospho-1-deoxy-D-ribulos-1-ylimino)methylamino]-1-(5-phospho-beta-D-ribosyl)imidazole-4-carboxamide. It functions in the pathway amino-acid biosynthesis; L-histidine biosynthesis; L-histidine from 5-phospho-alpha-D-ribose 1-diphosphate: step 4/9. The polypeptide is 1-(5-phosphoribosyl)-5-[(5-phosphoribosylamino)methylideneamino] imidazole-4-carboxamide isomerase (Methanospirillum hungatei JF-1 (strain ATCC 27890 / DSM 864 / NBRC 100397 / JF-1)).